The chain runs to 485 residues: ATP-dependent 6-phosphofructokinase 7 (485 aa).

ATP contacts are provided by residues Gly101, 164–165 (RG), and 189–192 (GDGT). Residue Asp190 participates in Mg(2+) binding. Substrate is bound by residues 218 to 220 (TID), 263 to 265 (MGR), Glu319, and 374 to 377 (YMIR). The Proton acceptor role is filled by Asp220. Positions 449-485 (SFLGPKDTSEEKKELPETPLLDDGAVDIPPVTKEVTK) are disordered. The span at 455 to 464 (DTSEEKKELP) shows a compositional bias: basic and acidic residues.

It belongs to the phosphofructokinase type A (PFKA) family. PPi-dependent PFK group II subfamily. Atypical ATP-dependent clade 'X' sub-subfamily. In terms of assembly, homotetramer. Requires Mg(2+) as cofactor. As to expression, expressed in roots, leaves, stems and flowers.

It localises to the cytoplasm. The catalysed reaction is beta-D-fructose 6-phosphate + ATP = beta-D-fructose 1,6-bisphosphate + ADP + H(+). It participates in carbohydrate degradation; glycolysis; D-glyceraldehyde 3-phosphate and glycerone phosphate from D-glucose: step 3/4. Allosterically activated by AMP. In terms of biological role, catalyzes the phosphorylation of D-fructose 6-phosphate to fructose 1,6-bisphosphate by ATP, the first committing step of glycolysis. The chain is ATP-dependent 6-phosphofructokinase 7 from Arabidopsis thaliana (Mouse-ear cress).